The sequence spans 545 residues: 2-succinyl-5-enolpyruvyl-6-hydroxy-3-cyclohexene-1-carboxylate synthase (545 aa).

Residues Gln-170–Ser-185 are compositionally biased toward polar residues. A disordered region spans residues Gln-170–Leu-193.

Belongs to the TPP enzyme family. MenD subfamily. In terms of assembly, homodimer. It depends on Mg(2+) as a cofactor. Mn(2+) serves as cofactor. The cofactor is thiamine diphosphate.

It carries out the reaction isochorismate + 2-oxoglutarate + H(+) = 5-enolpyruvoyl-6-hydroxy-2-succinyl-cyclohex-3-ene-1-carboxylate + CO2. It participates in quinol/quinone metabolism; 1,4-dihydroxy-2-naphthoate biosynthesis; 1,4-dihydroxy-2-naphthoate from chorismate: step 2/7. Its pathway is cofactor biosynthesis; phylloquinone biosynthesis. Catalyzes the thiamine diphosphate-dependent decarboxylation of 2-oxoglutarate and the subsequent addition of the resulting succinic semialdehyde-thiamine pyrophosphate anion to isochorismate to yield 2-succinyl-5-enolpyruvyl-6-hydroxy-3-cyclohexene-1-carboxylate (SEPHCHC). The polypeptide is 2-succinyl-5-enolpyruvyl-6-hydroxy-3-cyclohexene-1-carboxylate synthase (Parasynechococcus marenigrum (strain WH8102)).